A 243-amino-acid polypeptide reads, in one-letter code: ATP synthase subunit a, chloroplastic (243 aa).

Transmembrane regions (helical) follow at residues 32 to 52 (GQVL…SFVG), 96 to 116 (TVFL…WALI), 129 to 149 (DINT…YAGI), 195 to 215 (LVVG…IMLL), and 216 to 236 (GCFT…AYIG).

It belongs to the ATPase A chain family. As to quaternary structure, F-type ATPases have 2 components, CF(1) - the catalytic core - and CF(0) - the membrane proton channel. CF(1) has five subunits: alpha(3), beta(3), gamma(1), delta(1), epsilon(1). CF(0) has four main subunits: a, b, b' and c.

Its subcellular location is the plastid. It is found in the chloroplast thylakoid membrane. In terms of biological role, key component of the proton channel; it plays a direct role in the translocation of protons across the membrane. In Tetradesmus obliquus (Green alga), this protein is ATP synthase subunit a, chloroplastic.